Reading from the N-terminus, the 200-residue chain is Large ribosomal subunit protein uL4 (200 aa).

Residues 38–75 (GRQGSKQQKNRSDVSGGGKRPWRQKGTGRARAGTSRGP) are disordered.

The protein belongs to the universal ribosomal protein uL4 family. Part of the 50S ribosomal subunit.

In terms of biological role, one of the primary rRNA binding proteins, this protein initially binds near the 5'-end of the 23S rRNA. It is important during the early stages of 50S assembly. It makes multiple contacts with different domains of the 23S rRNA in the assembled 50S subunit and ribosome. Functionally, forms part of the polypeptide exit tunnel. The polypeptide is Large ribosomal subunit protein uL4 (Azotobacter vinelandii (strain DJ / ATCC BAA-1303)).